A 268-amino-acid polypeptide reads, in one-letter code: Ethylene-responsive transcription factor ERN1 (268 aa).

Residues 1 to 21 (MEIQFQQPNMQNQKAGISVTN) are compositionally biased toward polar residues. Residues 1 to 36 (MEIQFQQPNMQNQKAGISVTNKGGKFKGRNRNSNNT) are disordered. The segment at residues 38–95 (KFVGVRQRPSGRWVAEIKDTTQKIRMWLGTFETAEEAARAYDEAACLLRGSNTRTNFI) is a DNA-binding region (AP2/ERF). Positions 114–154 (NRKGDKKQEDGAVASAPSNSKTTISNTSTITSNDDNKESTL) are disordered. Positions 131–146 (SNSKTTISNTSTITSN) are enriched in low complexity.

The protein belongs to the AP2/ERF transcription factor family. ERF subfamily. Expressed in roots, root hairs and leaves. Expressed in root epidermis and root hairs.

It localises to the nucleus. Its function is as follows. Transcription factor involved in symbiotic nodule signaling in response to rhizobial Nod factors (NFs). Binds to the GCC-box (NF-responsive box) of ENOD11 promoter. Acts as a transcriptional activator of NF-responsive box-containing target gene promoters in root hairs. Functions as a transcriptional regulator required for root infection by symbiotic rhizobia, infection thread (IT) formation and maintenance, and nodule development. Necessary for NF-induced gene expression and spontaneous nodulation activated by CCAMK. Functions downstream of CCAMK to activate nodulation gene expression. Involved in early stages of root nodule development. Functions redundantly with ERN2. Is essential with ERN2 for the initiation of root hair infection, and nodule organogenesis and development. Required for accurate expression of the NF signaling genes ENOD11 and ENOD12. The polypeptide is Ethylene-responsive transcription factor ERN1 (Medicago truncatula (Barrel medic)).